The primary structure comprises 352 residues: Probable RNA methyltransferase Mpe_A3613 (352 aa).

Glutamate 88 serves as the catalytic Proton acceptor. In terms of domain architecture, Radical SAM core spans 91 to 317 (LLPRDGLCVS…TKLRRSAGQD (227 aa)). An intrachain disulfide couples cysteine 98 to cysteine 322. Residues cysteine 105, cysteine 109, and cysteine 112 each contribute to the [4Fe-4S] cluster site. Residues 150–151 (GE), serine 180, 203–205 (SLH), and asparagine 279 each bind S-adenosyl-L-methionine. Cysteine 322 serves as the catalytic S-methylcysteine intermediate.

It belongs to the radical SAM superfamily. RlmN family. Requires [4Fe-4S] cluster as cofactor.

It localises to the cytoplasm. The sequence is that of Probable RNA methyltransferase Mpe_A3613 from Methylibium petroleiphilum (strain ATCC BAA-1232 / LMG 22953 / PM1).